Here is an 871-residue protein sequence, read N- to C-terminus: Coatomer subunit gamma-2 (871 aa).

A compositionally biased stretch (basic and acidic residues) spans 1–11 (MIKKFDKKDEE). Residues 1 to 20 (MIKKFDKKDEESGSGSNPFR) form a disordered region. HEAT repeat units lie at residues 64 to 101 (TEAT…ISED), 283 to 320 (RELA…KHPS), 321 to 355 (AVTA…GSES), 356 to 392 (SVDR…KYPR), 395 to 430 (SVMM…ENPE), and 467 to 504 (PVPS…QNEN). Position 594 is a phosphothreonine (Thr594).

It belongs to the COPG family. As to quaternary structure, oligomeric complex. Binds to CDC42. Interacts with JAGN1. Interacts with TMED10 (via cytoplasmic domain).

It localises to the cytoplasm. Its subcellular location is the cytosol. It is found in the golgi apparatus membrane. The protein localises to the cytoplasmic vesicle. The protein resides in the COPI-coated vesicle membrane. In terms of biological role, the coatomer is a cytosolic protein complex that binds to dilysine motifs and reversibly associates with Golgi non-clathrin-coated vesicles, which further mediate biosynthetic protein transport from the ER, via the Golgi up to the trans Golgi network. Coatomer complex is required for budding from Golgi membranes, and is essential for the retrograde Golgi-to-ER transport of dilysine-tagged proteins. In mammals, the coatomer can only be recruited by membranes associated to ADP-ribosylation factors (ARFs), which are small GTP-binding proteins; the complex also influences the Golgi structural integrity, as well as the processing, activity, and endocytic recycling of LDL receptors. The sequence is that of Coatomer subunit gamma-2 (COPG2) from Bos taurus (Bovine).